The sequence spans 196 residues: Glycerol-3-phosphate acyltransferase (196 aa).

The next 5 membrane-spanning stretches (helical) occupy residues 1-21 (MGFIIGFLLSVFGYLLGSILF), 53-73 (KYGALVFLLDAFKGFLIAILD), 76-96 (YIDPSSLWFGIVMVSPVIGHI), 115-135 (VVFGISPLLALKMFLVWAFVF), and 141-161 (VSLASITSVLVGYFLFLEGDF).

Belongs to the PlsY family. As to quaternary structure, probably interacts with PlsX.

The protein localises to the cell inner membrane. It catalyses the reaction an acyl phosphate + sn-glycerol 3-phosphate = a 1-acyl-sn-glycero-3-phosphate + phosphate. Its pathway is lipid metabolism; phospholipid metabolism. Functionally, catalyzes the transfer of an acyl group from acyl-phosphate (acyl-PO(4)) to glycerol-3-phosphate (G3P) to form lysophosphatidic acid (LPA). This enzyme utilizes acyl-phosphate as fatty acyl donor, but not acyl-CoA or acyl-ACP. This chain is Glycerol-3-phosphate acyltransferase, found in Hydrogenobaculum sp. (strain Y04AAS1).